The chain runs to 342 residues: S-adenosyl-L-methionine-dependent tRNA 4-demethylwyosine synthase (342 aa).

The [2Fe-2S] cluster site is built by C45, C58, and C71. The Radical SAM core domain occupies 64–312; it reads YGIHSHRCLQ…VKHLPGYHIE (249 aa). Residues C81, C85, and C88 each contribute to the [4Fe-4S] cluster site.

This sequence belongs to the TYW1 family. Monomer. [2Fe-2S] cluster is required as a cofactor. Requires [4Fe-4S] cluster as cofactor.

Its subcellular location is the cytoplasm. It carries out the reaction N(1)-methylguanosine(37) in tRNA(Phe) + pyruvate + S-adenosyl-L-methionine = 4-demethylwyosine(37) in tRNA(Phe) + 5'-deoxyadenosine + L-methionine + CO2 + H2O. Its function is as follows. Component of the wyosine derivatives biosynthesis pathway that catalyzes the condensation of N-methylguanine with 2 carbon atoms from pyruvate to form the tricyclic 4-demethylwyosine (imG-14) on guanosine-37 of tRNA(Phe). The polypeptide is S-adenosyl-L-methionine-dependent tRNA 4-demethylwyosine synthase (Pyrococcus horikoshii (strain ATCC 700860 / DSM 12428 / JCM 9974 / NBRC 100139 / OT-3)).